The primary structure comprises 725 residues: Catalase-peroxidase (725 aa).

Residues 88–211 constitute a cross-link (tryptophyl-tyrosyl-methioninium (Trp-Tyr) (with M-237)); that stretch reads WHSAGTYRIQ…LAASEMGLIY (124 aa). The active-site Proton acceptor is H89. Positions 211–237 form a cross-link, tryptophyl-tyrosyl-methioninium (Tyr-Met) (with W-88); that stretch reads YVNPEGPGREPDPLKAAQQIRETFKRM. H252 lines the heme b pocket.

Belongs to the peroxidase family. Peroxidase/catalase subfamily. Homodimer or homotetramer. Heme b serves as cofactor. Post-translationally, formation of the three residue Trp-Tyr-Met cross-link is important for the catalase, but not the peroxidase activity of the enzyme.

It carries out the reaction H2O2 + AH2 = A + 2 H2O. It catalyses the reaction 2 H2O2 = O2 + 2 H2O. Bifunctional enzyme with both catalase and broad-spectrum peroxidase activity. The polypeptide is Catalase-peroxidase (Symbiobacterium thermophilum (strain DSM 24528 / JCM 14929 / IAM 14863 / T)).